The sequence spans 249 residues: Uridylate kinase (249 aa).

Residue Lys-21–Gly-24 participates in ATP binding. Residue Gly-63 participates in UMP binding. Gly-64 and Arg-68 together coordinate ATP. UMP-binding positions include Asp-84 and Thr-145–Thr-152. The ATP site is built by Thr-172, Tyr-178, and Asp-181.

The protein belongs to the UMP kinase family. As to quaternary structure, homohexamer.

Its subcellular location is the cytoplasm. It catalyses the reaction UMP + ATP = UDP + ADP. It participates in pyrimidine metabolism; CTP biosynthesis via de novo pathway; UDP from UMP (UMPK route): step 1/1. Inhibited by UTP. Catalyzes the reversible phosphorylation of UMP to UDP. This chain is Uridylate kinase, found in Francisella tularensis subsp. tularensis (strain FSC 198).